The sequence spans 81 residues: Cytotoxin 1d/1e (81 aa).

A signal peptide spans 1-21 (MKTLLLTLVVVTIVCLDLGYT). 4 disulfides stabilise this stretch: C24-C42, C35-C59, C63-C74, and C75-C80.

Belongs to the three-finger toxin family. Short-chain subfamily. Type IA cytotoxin sub-subfamily. Monomer in solution; Homodimer and oligomer in the presence of negatively charged lipids forming a pore with a size ranging between 20 and 30 Angstroms. Expressed by the venom gland.

The protein resides in the secreted. The protein localises to the target cell membrane. Functionally, shows cytolytic activity on many different cells by forming pore in lipid membranes. In vivo, increases heart rate or kills the animal by cardiac arrest. In addition, it binds to heparin with high affinity, interacts with Kv channel-interacting protein 1 (KCNIP1) in a calcium-independent manner, and binds to integrin alpha-V/beta-3 (ITGAV/ITGB3) with moderate affinity. The sequence is that of Cytotoxin 1d/1e from Naja atra (Chinese cobra).